The sequence spans 500 residues: Potassium/proton antiporter CemA (500 aa).

The chain crosses the membrane as a helical span at residues 129 to 149; that stretch reads LFLTTIKTIFILFFVPFLVNF. Residues 204–354 are insert; sequence HQTHRDSKPL…GSLDSIKNKD (151 aa). 3 helical membrane passes run 378–398, 425–445, and 461–481; these read ITNF…LITL, ILLI…ELFF, and IFLL…YLIF.

Belongs to the CemA family.

The protein resides in the plastid. It is found in the chloroplast inner membrane. The catalysed reaction is K(+)(in) + H(+)(out) = K(+)(out) + H(+)(in). Its function is as follows. Contributes to K(+)/H(+) antiport activity by supporting proton efflux to control proton extrusion and homeostasis in chloroplasts in a light-dependent manner to modulate photosynthesis. Prevents excessive induction of non-photochemical quenching (NPQ) under continuous-light conditions. Indirectly promotes efficient inorganic carbon uptake into chloroplasts. This chain is Potassium/proton antiporter CemA, found in Chlamydomonas reinhardtii (Chlamydomonas smithii).